The following is a 121-amino-acid chain: MNAQEIIRSIEAEQMKTQLPVLHIGDTVKVNVRIREGGKERIQAFEGTIISMARAGINRTVTVRRIFQGIGVERVFLVHSPRIESMTVTRLGKVRRAKLYYLRDRIGKATRVKQKITRKAN.

The protein belongs to the bacterial ribosomal protein bL19 family.

Its function is as follows. This protein is located at the 30S-50S ribosomal subunit interface and may play a role in the structure and function of the aminoacyl-tRNA binding site. This chain is Large ribosomal subunit protein bL19, found in Gloeobacter violaceus (strain ATCC 29082 / PCC 7421).